Reading from the N-terminus, the 109-residue chain is UPF0122 protein CLL_A1244 (109 aa).

The protein belongs to the UPF0122 family.

Might take part in the signal recognition particle (SRP) pathway. This is inferred from the conservation of its genetic proximity to ftsY/ffh. May be a regulatory protein. This is UPF0122 protein CLL_A1244 from Clostridium botulinum (strain Eklund 17B / Type B).